The sequence spans 504 residues: Kinesin light chain 3 (504 aa).

The stretch at A90 to L150 forms a coiled coil. The disordered stretch occupies residues L153–Q197. The span at P158 to S167 shows a compositional bias: low complexity. S173 carries the phosphoserine modification. TPR repeat units follow at residues L207–S240, A249–T282, A291–V324, A333–L366, and A375–P408. The tract at residues L411–S438 is disordered. A Phosphoserine modification is found at S466. A Phosphothreonine modification is found at T498. Phosphoserine is present on S502.

Belongs to the kinesin light chain family. As to quaternary structure, oligomer composed of two heavy chains and two light chains. Associates with microtubulin in an ATP-dependent manner. Interacts with KIF5C. Interacts with ODF1. Interacts with LRGUK. Interacts with VDAC2.

It is found in the cytoplasm. It localises to the cytoskeleton. The protein resides in the mitochondrion. Functionally, kinesin is a microtubule-associated force-producing protein that may play a role in organelle transport. Plays a role during spermiogenesis in the development of the sperm tail midpiece and in the normal function of spermatozoa. May play a role in the formation of the mitochondrial sheath formation in the developing spermatid midpiece. This is Kinesin light chain 3 (KLC3) from Pongo abelii (Sumatran orangutan).